A 374-amino-acid polypeptide reads, in one-letter code: Guanine nucleotide-binding protein subunit alpha-15 (374 aa).

The 334-residue stretch at 41–374 folds into the G-alpha domain; sequence GELKLLLLGP…ARYLDEINLL (334 aa). A G1 motif region spans residues 44-57; that stretch reads KLLLLGPGESGKST. Residues 49 to 56, 183 to 189, 208 to 212, 277 to 280, and Ala-346 each bind GTP; these read GPGESGKS, LRSRMPT, DAGGQ, and NKTD. Mg(2+) contacts are provided by Ser-56 and Thr-189. The interval 181–189 is G2 motif; sequence DVLRSRMPT. The tract at residues 204–213 is G3 motif; that stretch reads LRIVDAGGQK. Residues 273–280 are G4 motif; it reads ILFLNKTD. The interval 344-349 is G5 motif; it reads TCATDT.

This sequence belongs to the G-alpha family. G(q) subfamily. In terms of assembly, g proteins are composed of 3 units; alpha, beta and gamma. The alpha chain contains the guanine nucleotide binding site.

Functionally, guanine nucleotide-binding proteins (G proteins) are involved as modulators or transducers in various transmembrane signaling systems. The chain is Guanine nucleotide-binding protein subunit alpha-15 (Gna15) from Rattus norvegicus (Rat).